The following is a 131-amino-acid chain: Small ribosomal subunit protein uS11 (131 aa).

The protein belongs to the universal ribosomal protein uS11 family. Part of the 30S ribosomal subunit. Interacts with proteins S7 and S18. Binds to IF-3.

Located on the platform of the 30S subunit, it bridges several disparate RNA helices of the 16S rRNA. Forms part of the Shine-Dalgarno cleft in the 70S ribosome. The sequence is that of Small ribosomal subunit protein uS11 from Trichodesmium erythraeum (strain IMS101).